Consider the following 772-residue polypeptide: Annulin (772 aa).

2 S-palmitoyl cysteine lipidation sites follow: cysteine 4 and cysteine 5. The tract at residues 15-57 is disordered; the sequence is NEGSGGGIPLMPVRGGSTRRPDSLPKPPAAVVPSPPSPGDVPD. Positions 38 to 53 are enriched in pro residues; sequence LPKPPAAVVPSPPSPG. Catalysis depends on residues histidine 400 and aspartate 427. Positions 467, 469, 517, and 522 each coordinate Ca(2+).

Belongs to the transglutaminase superfamily. Transglutaminase family. Ca(2+) is required as a cofactor. Has an annular, or ring-like expression pattern in epithelial annuli of developing limb segment boundary cells. In embryos, it is seen in gastrulating cells, in cells surrounding rapidly dividing neuroblasts, and in muscle pioneer cells invaginating to form apodemes.

It is found in the cell membrane. It catalyses the reaction L-glutaminyl-[protein] + L-lysyl-[protein] = [protein]-L-lysyl-N(6)-5-L-glutamyl-[protein] + NH4(+). In terms of biological role, participates in morphogenetic activities of the cells, maybe by stabilizing the membrane or subcortical structures of cells that are under mechanical stress. Probably catalyzes the cross-linking of proteins and the conjugation of polyamines to proteins. The sequence is that of Annulin from Schistocerca americana (American grasshopper).